We begin with the raw amino-acid sequence, 433 residues long: UPF0597 protein PG_0909 (433 aa).

This sequence belongs to the UPF0597 family.

The sequence is that of UPF0597 protein PG_0909 from Porphyromonas gingivalis (strain ATCC BAA-308 / W83).